A 184-amino-acid polypeptide reads, in one-letter code: Protein CPn_0803/CP_1068/CPj0803/CpB0832 (184 aa).

It belongs to the chlamydial CPn_0803/CT_584/TC_0873 family.

This Chlamydia pneumoniae (Chlamydophila pneumoniae) protein is Protein CPn_0803/CP_1068/CPj0803/CpB0832.